Here is a 1182-residue protein sequence, read N- to C-terminus: uncharacterized protein (1182 aa).

A helical membrane pass occupies residues 618–638 (GSSSLVCSVMVVIFSIILYYL).

Its subcellular location is the host membrane. This is an uncharacterized protein from Callospermophilus lateralis (Golden-mantled ground squirrel).